The following is a 276-amino-acid chain: 4-hydroxy-tetrahydrodipicolinate reductase (276 aa).

NAD(+)-binding positions include 18–23 (GASGRM) and D44. R45 lines the NADP(+) pocket. Residues 107-109 (GTT) and 131-134 (APNM) contribute to the NAD(+) site. Residue H164 is the Proton donor/acceptor of the active site. H165 contributes to the (S)-2,3,4,5-tetrahydrodipicolinate binding site. The active-site Proton donor is the K168. 174-175 (GT) lines the (S)-2,3,4,5-tetrahydrodipicolinate pocket.

Belongs to the DapB family.

It localises to the cytoplasm. It catalyses the reaction (S)-2,3,4,5-tetrahydrodipicolinate + NAD(+) + H2O = (2S,4S)-4-hydroxy-2,3,4,5-tetrahydrodipicolinate + NADH + H(+). The catalysed reaction is (S)-2,3,4,5-tetrahydrodipicolinate + NADP(+) + H2O = (2S,4S)-4-hydroxy-2,3,4,5-tetrahydrodipicolinate + NADPH + H(+). The protein operates within amino-acid biosynthesis; L-lysine biosynthesis via DAP pathway; (S)-tetrahydrodipicolinate from L-aspartate: step 4/4. Its function is as follows. Catalyzes the conversion of 4-hydroxy-tetrahydrodipicolinate (HTPA) to tetrahydrodipicolinate. The sequence is that of 4-hydroxy-tetrahydrodipicolinate reductase from Aromatoleum aromaticum (strain DSM 19018 / LMG 30748 / EbN1) (Azoarcus sp. (strain EbN1)).